Reading from the N-terminus, the 386-residue chain is Succinate--CoA ligase [ADP-forming] subunit beta (386 aa).

The ATP-grasp domain maps to 9–244 (KEILRKYGVP…HDEEDPLETR (236 aa)). Residues Lys46, 53 to 55 (GRG), Glu99, Cys102, and Glu107 contribute to the ATP site. Mg(2+) contacts are provided by Asn199 and Asp213. Substrate is bound by residues Asn264 and 321 to 323 (GIM).

Belongs to the succinate/malate CoA ligase beta subunit family. As to quaternary structure, heterotetramer of two alpha and two beta subunits. Requires Mg(2+) as cofactor.

The enzyme catalyses succinate + ATP + CoA = succinyl-CoA + ADP + phosphate. The catalysed reaction is GTP + succinate + CoA = succinyl-CoA + GDP + phosphate. The protein operates within carbohydrate metabolism; tricarboxylic acid cycle; succinate from succinyl-CoA (ligase route): step 1/1. Succinyl-CoA synthetase functions in the citric acid cycle (TCA), coupling the hydrolysis of succinyl-CoA to the synthesis of either ATP or GTP and thus represents the only step of substrate-level phosphorylation in the TCA. The beta subunit provides nucleotide specificity of the enzyme and binds the substrate succinate, while the binding sites for coenzyme A and phosphate are found in the alpha subunit. The sequence is that of Succinate--CoA ligase [ADP-forming] subunit beta from Rickettsia peacockii (strain Rustic).